Reading from the N-terminus, the 118-residue chain is Small ribosomal subunit protein uS13 (118 aa).

The disordered stretch occupies residues Ser-94–Lys-118.

This sequence belongs to the universal ribosomal protein uS13 family. As to quaternary structure, part of the 30S ribosomal subunit. Forms a loose heterodimer with protein S19. Forms two bridges to the 50S subunit in the 70S ribosome.

In terms of biological role, located at the top of the head of the 30S subunit, it contacts several helices of the 16S rRNA. In the 70S ribosome it contacts the 23S rRNA (bridge B1a) and protein L5 of the 50S subunit (bridge B1b), connecting the 2 subunits; these bridges are implicated in subunit movement. Contacts the tRNAs in the A and P-sites. The chain is Small ribosomal subunit protein uS13 from Aliivibrio fischeri (strain ATCC 700601 / ES114) (Vibrio fischeri).